The following is a 481-amino-acid chain: Glutamyl-tRNA(Gln) amidotransferase subunit A (481 aa).

Residues Lys-76 and Ser-151 each act as charge relay system in the active site. Ser-175 acts as the Acyl-ester intermediate in catalysis.

This sequence belongs to the amidase family. GatA subfamily. In terms of assembly, heterotrimer of A, B and C subunits.

It carries out the reaction L-glutamyl-tRNA(Gln) + L-glutamine + ATP + H2O = L-glutaminyl-tRNA(Gln) + L-glutamate + ADP + phosphate + H(+). Allows the formation of correctly charged Gln-tRNA(Gln) through the transamidation of misacylated Glu-tRNA(Gln) in organisms which lack glutaminyl-tRNA synthetase. The reaction takes place in the presence of glutamine and ATP through an activated gamma-phospho-Glu-tRNA(Gln). The polypeptide is Glutamyl-tRNA(Gln) amidotransferase subunit A (Neisseria gonorrhoeae (strain NCCP11945)).